Here is a 222-residue protein sequence, read N- to C-terminus: Probable transaldolase (222 aa).

Catalysis depends on lysine 91, which acts as the Schiff-base intermediate with substrate.

It belongs to the transaldolase family. Type 3B subfamily.

Its subcellular location is the cytoplasm. The catalysed reaction is D-sedoheptulose 7-phosphate + D-glyceraldehyde 3-phosphate = D-erythrose 4-phosphate + beta-D-fructose 6-phosphate. Its pathway is carbohydrate degradation; pentose phosphate pathway; D-glyceraldehyde 3-phosphate and beta-D-fructose 6-phosphate from D-ribose 5-phosphate and D-xylulose 5-phosphate (non-oxidative stage): step 2/3. Functionally, transaldolase is important for the balance of metabolites in the pentose-phosphate pathway. The sequence is that of Probable transaldolase from Pelodictyon phaeoclathratiforme (strain DSM 5477 / BU-1).